The chain runs to 679 residues: WD repeat-containing protein 48 homolog (679 aa).

WD repeat units lie at residues glutamine 26–tyrosine 65, histidine 71–threonine 110, threonine 113–alanine 152, glycine 164–lysine 203, glycine 206–threonine 245, valine 248–leucine 287, glutamate 290–leucine 329, and lysine 349–glutamate 388. Positions proline 594–serine 615 are disordered.

Belongs to the WD repeat WDR48 family. As to quaternary structure, catalytic component of the Usp12-46 deubiquitylase complex consisting of Usp12-46, Wdr20 and Uaf1; regulatory subunit that, together wtih Wdr20, stabilizes Usp12-46. The Usp12-46 deubiquitylase complex associates with arr/arrow; the interaction leads to deubiquitination and stabilization of arr/arrow.

Functionally, regulatory component of the Usp12-46 deubiquitylase complex. activates deubiquitination by increasing the catalytic turnover without increasing the affinity of deubiquitinating enzymes for the substrate. The complex deubiquitylates the wg/wingless-signaling receptor arr/arrow, which stabilizes the receptor and increases its concentration at the cell surface; this enhances the sensitivity of cells to wg/wingless-signal stimulation. This increases the amplitude and spatial range of the signaling response to the wg/wingless morphogen gradient, facilitating the precise concentration-dependent regulation of its target genes. Together with Wdr20 and Usp12-46 required for wg/wingless-mediated signaling in the wing imaginal disc and for wg/wingless-dependent regulation of intestinal stem cell proliferation. The chain is WD repeat-containing protein 48 homolog from Drosophila mojavensis (Fruit fly).